Reading from the N-terminus, the 1444-residue chain is RNA-directed RNA polymerase P1 (1444 aa).

Residues serine 156–tryptophan 182 form a disordered region. Positions leucine 690–glutamate 897 constitute a RdRp catalytic domain.

The protein belongs to the reoviridae RNA-directed RNA polymerase family.

The protein resides in the virion. It localises to the host cytoplasm. It catalyses the reaction RNA(n) + a ribonucleoside 5'-triphosphate = RNA(n+1) + diphosphate. Functionally, RNA-directed RNA polymerase that is involved in both transcription and genome replication. Together with the capping enzyme P5 and protein P7, forms an enzyme complex positioned near the channels situated at each of the five-fold vertices of the core. The chain is RNA-directed RNA polymerase P1 (S1) from Rice dwarf virus (isolate Fujian) (RDV).